A 396-amino-acid chain; its full sequence is Elongation factor Tu (396 aa).

Residues 10–205 (KPHVNIGTIG…AVDESIPAPV (196 aa)) enclose the tr-type G domain. The segment at 19-26 (GHVDHGKT) is G1. 19–26 (GHVDHGKT) is a GTP binding site. Thr-26 contacts Mg(2+). Positions 62–66 (GITIN) are G2. A G3 region spans residues 83 to 86 (DAPG). GTP-binding positions include 83–87 (DAPGH) and 138–141 (NKSD). The G4 stretch occupies residues 138 to 141 (NKSD). The tract at residues 175–177 (SAL) is G5.

The protein belongs to the TRAFAC class translation factor GTPase superfamily. Classic translation factor GTPase family. EF-Tu/EF-1A subfamily. Monomer.

It is found in the cytoplasm. It carries out the reaction GTP + H2O = GDP + phosphate + H(+). Functionally, GTP hydrolase that promotes the GTP-dependent binding of aminoacyl-tRNA to the A-site of ribosomes during protein biosynthesis. In Mycobacterium leprae (strain Br4923), this protein is Elongation factor Tu.